A 122-amino-acid chain; its full sequence is MIQQETRLKVADNSGAREVLTIKVLGGSGRKTANIGDVIVCTVKQATPGGVVKKGDVVRAVVVRSKSGARRNDGSYIKFDENACVIIRDDKSPRGTRIFGPVARELRDNNFMKIVSLAPEVL.

It belongs to the universal ribosomal protein uL14 family. As to quaternary structure, part of the 50S ribosomal subunit. Forms a cluster with proteins L3 and L19. In the 70S ribosome, L14 and L19 interact and together make contacts with the 16S rRNA in bridges B5 and B8.

Functionally, binds to 23S rRNA. Forms part of two intersubunit bridges in the 70S ribosome. The sequence is that of Large ribosomal subunit protein uL14 from Bacillus licheniformis (strain ATCC 14580 / DSM 13 / JCM 2505 / CCUG 7422 / NBRC 12200 / NCIMB 9375 / NCTC 10341 / NRRL NRS-1264 / Gibson 46).